The chain runs to 1783 residues: Chitin synthase A (1783 aa).

N-linked (GlcNAc...) asparagine glycans are attached at residues Asn159, Asn637, Asn652, Asn664, and Asn669. 2 helical membrane passes run 745-765 (IWVA…LSFV) and 781-801 (LTLV…IVAF). N-linked (GlcNAc...) asparagine glycans are attached at residues Asn1014 and Asn1018. A helical transmembrane segment spans residues 1051 to 1071 (IMLAMTIILCSVILVKFLAAL). The N-linked (GlcNAc...) asparagine glycan is linked to Asn1416. A run of 3 helical transmembrane segments spans residues 1441–1461 (FVVF…IYLG), 1474–1494 (FPII…LIFI), and 1502–1522 (IGWM…LPIY). 2 N-linked (GlcNAc...) asparagine glycosylation sites follow: Asn1529 and Asn1617. A disordered region spans residues 1659 to 1724 (THDINRGQTP…SFDFQRGNMQ (66 aa)). Over residues 1664–1688 (RGQTPFQDFPSSRPSVSNLRGQANP) the composition is skewed to polar residues. A glycan (N-linked (GlcNAc...) asparagine) is linked at Asn1695. Positions 1725–1781 (GPDDSMIIEAIQGVLREVDLDTVTKKQVRALVEQRLQTGLVGERRTFMDRQIDNELA) constitute a DEK-C domain.

The protein belongs to the chitin synthase family. Class V subfamily.

The protein localises to the cell membrane. It catalyses the reaction [(1-&gt;4)-N-acetyl-beta-D-glucosaminyl](n) + UDP-N-acetyl-alpha-D-glucosamine = [(1-&gt;4)-N-acetyl-beta-D-glucosaminyl](n+1) + UDP + H(+). Polymerizes chitin, a structural polymer of the cell wall and septum, by transferring the sugar moiety of UDP-GlcNAc to the non-reducing end of the growing chitin polymer. Responsible for about 29% of the chitin in conidial walls, is essential for conidial wall strength in media with high water potential and contributes to strength of hyphal tips. This Colletotrichum graminicola (Maize anthracnose fungus) protein is Chitin synthase A.